Reading from the N-terminus, the 900-residue chain is Translation initiation factor IF-2 (900 aa).

Disordered stretches follow at residues 30-77 and 89-291; these read GEFV…SLDK and NGKA…YDSM. Low complexity predominate over residues 89–112; sequence NGKATAAPAKAADSGGAAIVSPTT. A compositionally biased stretch (pro residues) spans 113–129; sequence PAAPEPPTAVPPSPQAP. Low complexity predominate over residues 175-187; the sequence is PGTARPGVPRPGA. A compositionally biased stretch (gly residues) spans 215–271; that stretch reads GRPGAPGAGRSDAGGGNYRGGGVGAAPGTGFRGRPGGGGGGRPGQRGGAAGAFGRPG. A compositionally biased stretch (basic residues) spans 275 to 284; it reads RRGRKSKRQK. One can recognise a tr-type G domain in the interval 396–567; it reads VRPPVVTVMG…AVLLTADAAL (172 aa). The tract at residues 405–412 is G1; that stretch reads GHVDHGKT. Residue 405 to 412 coordinates GTP; that stretch reads GHVDHGKT. Residues 430–434 are G2; that stretch reads GITQH. A G3 region spans residues 455-458; that stretch reads DTPG. GTP-binding positions include 455–459 and 509–512; these read DTPGH and NKID. The segment at 509–512 is G4; sequence NKID. The segment at 545 to 547 is G5; it reads SAK.

Belongs to the TRAFAC class translation factor GTPase superfamily. Classic translation factor GTPase family. IF-2 subfamily.

The protein resides in the cytoplasm. One of the essential components for the initiation of protein synthesis. Protects formylmethionyl-tRNA from spontaneous hydrolysis and promotes its binding to the 30S ribosomal subunits. Also involved in the hydrolysis of GTP during the formation of the 70S ribosomal complex. This is Translation initiation factor IF-2 from Mycobacterium bovis (strain BCG / Pasteur 1173P2).